We begin with the raw amino-acid sequence, 214 residues long: Charged multivesicular body protein 2b (214 aa).

Residues 25-55 adopt a coiled-coil conformation; that stretch reads QRTITRDRAALEKQERQLELEIKKMAKTGNK. The segment at 179 to 201 is disordered; it reads AKAPSAARGLPSASTSKASTISD. A compositionally biased stretch (polar residues) spans 190-199; that stretch reads SASTSKASTI. Positions 202–212 match the MIT-interacting motif motif; that stretch reads EEIERQLKALG.

The protein belongs to the SNF7 family. In terms of assembly, probable core component of the endosomal sorting required for transport complex III (ESCRT-III). ESCRT-III components are thought to multimerize to form a flat lattice on the perimeter membrane of the endosome.

The protein resides in the cytoplasm. Its subcellular location is the cytosol. It localises to the late endosome membrane. Probable core component of the endosomal sorting required for transport complex III (ESCRT-III) which is involved in multivesicular bodies (MVBs) formation and sorting of endosomal cargo proteins into MVBs. MVBs contain intraluminal vesicles (ILVs) that are generated by invagination and scission from the limiting membrane of the endosome and mostly are delivered to lysosomes enabling degradation of membrane proteins, such as stimulated growth factor receptors, lysosomal enzymes and lipids. This chain is Charged multivesicular body protein 2b (CHMP2B), found in Gallus gallus (Chicken).